Reading from the N-terminus, the 247-residue chain is 1-(5-phosphoribosyl)-5-[(5-phosphoribosylamino)methylideneamino] imidazole-4-carboxamide isomerase (247 aa).

The active-site Proton acceptor is aspartate 8. Aspartate 131 functions as the Proton donor in the catalytic mechanism.

This sequence belongs to the HisA/HisF family.

The protein resides in the cytoplasm. The enzyme catalyses 1-(5-phospho-beta-D-ribosyl)-5-[(5-phospho-beta-D-ribosylamino)methylideneamino]imidazole-4-carboxamide = 5-[(5-phospho-1-deoxy-D-ribulos-1-ylimino)methylamino]-1-(5-phospho-beta-D-ribosyl)imidazole-4-carboxamide. The protein operates within amino-acid biosynthesis; L-histidine biosynthesis; L-histidine from 5-phospho-alpha-D-ribose 1-diphosphate: step 4/9. In Methylobacillus flagellatus (strain ATCC 51484 / DSM 6875 / VKM B-1610 / KT), this protein is 1-(5-phosphoribosyl)-5-[(5-phosphoribosylamino)methylideneamino] imidazole-4-carboxamide isomerase.